The sequence spans 251 residues: Putative integrase/recombinase y4eF (251 aa).

Residues 1–40 (MLGREDIRTYQVYLANEKKLAPGSIHIALSALRFFFNVTL) enclose the Core-binding (CB) domain. Residues 58-231 (KLPIILSPDE…ATNKVCATES (174 aa)) form the Tyr recombinase domain. Active-site residues include R93, K118, H183, R186, and H209. Y218 (O-(3'-phospho-DNA)-tyrosine intermediate) is an active-site residue.

Belongs to the 'phage' integrase family.

This Sinorhizobium fredii (strain NBRC 101917 / NGR234) protein is Putative integrase/recombinase y4eF.